We begin with the raw amino-acid sequence, 652 residues long: Spermatogenesis-associated protein 13 (652 aa).

Residues 1–24 (MTSASPEDQNAPVGCPKGARRRRP) form a disordered region. Serine 78 carries the post-translational modification Phosphoserine. The disordered stretch occupies residues 81–108 (IGLDRVGRRRQMRASNVSSDGGTEPSAL). The tract at residues 98 to 150 (SSDGGTEPSALVDDNGSEEDFSYEDLCQASPRYLQPGGEQLAINELISDGNVV) is ABR (APC-binding region) domain. Position 114 is a phosphoserine (serine 114). Residues 147 to 206 (GNVVCAEALWDHVTMDDQELGFKAGDVIQVLEASNKDWWWGRSEDKEAWFPASFVRLRVN) enclose the SH3 domain. Residues 209 to 235 (ELSENSSSTPSEEQDEEASQSRHRHCE) are disordered. Residues 240–424 (MRTNVIREIM…KNVACLINER (185 aa)) form the DH domain. One can recognise a PH domain in the interval 455–561 (ELIHSGELTK…WLQACADERR (107 aa)). The segment at 561-652 (RRVQEDKEMG…TFNRLTPFRK (92 aa)) is C-terminal tail.

As to quaternary structure, interacts (via ABR and SH3 domain) with APC. The binding of APC enhances its GEF activity by relieving it from an autoinhibitory conformation, in which the ABR and SH3 domains are associated with the C-terminal tail. Interacts (via C-terminal tail) with PPP1R9B (via C-terminus). Interacts with RAC1. In terms of tissue distribution, expressed at high levels in the placenta, spleen and kidney, at moderate levels in lung, small intestine, liver, brain and heart, and at low levels in skeletal muscle. Expression is aberrantly enhanced in most colorectal tumors.

The protein resides in the cytoplasm. It is found in the cell projection. The protein localises to the filopodium. Its subcellular location is the lamellipodium. It localises to the ruffle membrane. The protein resides in the podosome. Its activity is regulated as follows. Both the ABR and the SH3 domains contribute to maintaining the protein in an inhibited conformation by associating with the C-terminal tail. Binding of these domains to the C-terminal tail inhibits the activity of the protein by blocking a region that is required for its GEF activity. Acts as a guanine nucleotide exchange factor (GEF) for RHOA, RAC1 and CDC42 GTPases. Regulates cell migration and adhesion assembly and disassembly through a RAC1, PI3K, RHOA and AKT1-dependent mechanism. Increases both RAC1 and CDC42 activity, but decreases the amount of active RHOA. Required for MMP9 up-regulation via the JNK signaling pathway in colorectal tumor cells. Involved in tumor angiogenesis and may play a role in intestinal adenoma formation and tumor progression. This is Spermatogenesis-associated protein 13 from Homo sapiens (Human).